A 642-amino-acid polypeptide reads, in one-letter code: Triacylglycerol lipase 3 (642 aa).

Residues 204 to 392 (LILQGGSLFG…NEIEPFLNIN (189 aa)) enclose the PNPLA domain. A GXSXG motif is present at residues 235 to 239 (GSSMG). S237 serves as the catalytic Nucleophile. The short motif at 298–303 (HGYSQD) is the HXXXXD acyltransferase motif element. Residue E403 is the Proton acceptor of the active site. Residues 471–481 (RKTQRSSSQSP) are compositionally biased toward polar residues. Residues 471 to 502 (RKTQRSSSQSPIKAGTVEDLEPEPLMSPVPPS) form a disordered region.

Its subcellular location is the lipid droplet. It catalyses the reaction a triacylglycerol + H2O = a diacylglycerol + a fatty acid + H(+). The catalysed reaction is 1,2,3-tri-(9Z-octadecenoyl)-glycerol + H2O = di-(9Z)-octadecenoylglycerol + (9Z)-octadecenoate + H(+). It carries out the reaction di-(9Z)-octadecenoylglycerol + H2O = (9Z-octadecenoyl)-glycerol + (9Z)-octadecenoate + H(+). The enzyme catalyses a 1-acyl-sn-glycero-3-phosphoethanolamine + (9Z)-octadecenoyl-CoA = 1-acyl-2-(9Z)-octadecenoyl-sn-glycero-3-phosphoethanolamine + CoA. It catalyses the reaction a 1-acyl-sn-glycero-3-phosphoethanolamine + hexadecanoyl-CoA = 1-acyl-2-hexadecanoyl-sn-glycero-3-phosphoethanolamine + CoA. Its activity is regulated as follows. Loses its lipolytic activity in cells lacking nonpolar lipids. Its function is as follows. Lipid particle-localized triacylglycerol (TAG) lipase. The lipid droplet/particle is a lipid storage compartment which serves as a depot of energy and building blocks for membrane lipid biosynthesis. Involved in the mobilization of the non-polar storage lipids triacylglycerols (TAGs) from lipid particles by hydrolysis of TAGs, releasing and supplying specific fatty acids to the appropriate metabolic pathways. Also catalyzes the acylation of lysophosphatidic acid (LPA). Important for efficient sporulation, but rather through its acyltransferase than lipase activity. This is Triacylglycerol lipase 3 (TGL3) from Saccharomyces cerevisiae (strain ATCC 204508 / S288c) (Baker's yeast).